Here is a 957-residue protein sequence, read N- to C-terminus: Receptor-like protein 34 (957 aa).

An N-terminal signal peptide occupies residues 1–31 (MKGSWVVSTSIIRITLSFTFLFICHFSDVLA). The Extracellular segment spans residues 32-910 (APTRHLCRPE…EEEDEDLISW (879 aa)). 7 N-linked (GlcNAc...) asparagine glycosylation sites follow: Asn78, Asn101, Asn114, Asn143, Asn167, Asn191, and Asn215. LRR repeat units follow at residues 120-143 (LHFLTTLDRSHNDFEGQITSSIEN), 144-167 (LSHLTSLDLSYNRFSGQILNSIGN), 168-192 (LSRLTSLDLSFNQFSGQIPSSIGNL), 194-216 (HLTFLGLSGNRFFGQIPSSIGNL), 217-240 (SHLTFLGLSGNRFFGQFPSSIGGL), 241-264 (SNLTNLHLSYNKYSGQIPSSIGNL), 266-287 (QLIVLYLSVNNFYGEIPSSFGN), 288-312 (LNQLTRLDVSFNKLGGNFPNVLLNL), 313-336 (TGLSVVSLSNNKFTGTLPPNITSL), 338-360 (NLMAFYASDNAFTGTFPSFLFII), 361-384 (PSLTYLGLSGNQLKGTLEFGNISS), 386-409 (SNLQYLNIGSNNFIGPIPSSISKL), 412-434 (LQELGISHLNTQCRPVDFSIFSH), 435-459 (LKSLDDLRLSYLTTTTIDLNDILPY), 460-483 (FKTLRSLDLSGNLVSATNKSSVSS), 487-510 (SQSIQSLYLSGCGITDFPEILRTQ), 511-534 (HELGFLDVSNNKIKGQVPGWLWTL), and 535-557 (PNLFYLNLSNNTFIGFQRPTKPE). Residues Asn242 and Asn263 are each glycosylated (N-linked (GlcNAc...) asparagine). N-linked (GlcNAc...) asparagine glycans are attached at residues Asn311 and Asn332. Asn381 carries an N-linked (GlcNAc...) asparagine glycan. Asn477 carries an N-linked (GlcNAc...) asparagine glycan. Asn541, Asn544, Asn569, Asn593, Asn608, and Asn618 each carry an N-linked (GlcNAc...) asparagine glycan. Residues 558–580 (PSMAYLLGSNNNFTGKIPSFICE) form an LRR 19; degenerate repeat. LRR repeat units follow at residues 581–605 (LRSLYTLDLSDNNFSGSIPRCMENL), 606–630 (KSNLSELNLRQNNLSGGFPEHIFES), 632–652 (RSLDVGHNQLVGKLPRSLRFF), 653–675 (SNLEVLNVESNRINDMFPFWLSS), 677–698 (QKLQVLVLRSNAFHGPINQALF), 699–722 (PKLRIIDISHNHFNGSLPTEYFVE), 765–789 (LTIYTAVDFSGNKFEGEIPKSIGLL), 790–813 (KELHVLNLSNNAFTGHIPSSIGNL), 815–837 (ALESLDVSQNKLYGEIPQEIGNL), and 839–862 (LLSYMNFSHNQLTGLVPGGQQFLT). The N-linked (GlcNAc...) asparagine glycan is linked to Asn712. N-linked (GlcNAc...) asparagine glycosylation is found at Asn796, Asn812, Asn836, and Asn844. Residues 911 to 931 (IAAAIGFGPGIAFGLMFGYIL) form a helical membrane-spanning segment. At 932 to 957 (VSYKPEWFMNPFGRNNRRRKRHTTTH) the chain is on the cytoplasmic side.

It belongs to the RLP family.

It localises to the cell membrane. The sequence is that of Receptor-like protein 34 from Arabidopsis thaliana (Mouse-ear cress).